The primary structure comprises 361 residues: GTP 3',8-cyclase (361 aa).

The segment at 1 to 30 (MTVTALGLPTVARSTGDGSAGASPAPADGP) is disordered. Residues 16–30 (GDGSAGASPAPADGP) show a composition bias toward low complexity. One can recognise a Radical SAM core domain in the interval 34-252 (TYGRAATDLR…LQQHFELTPD (219 aa)). A GTP-binding site is contributed by R43. Residues C50 and C54 each contribute to the [4Fe-4S] cluster site. Residue Y56 participates in S-adenosyl-L-methionine binding. C57 serves as a coordination point for [4Fe-4S] cluster. R94 provides a ligand contact to GTP. G98 contacts S-adenosyl-L-methionine. T125 is a GTP binding site. S149 provides a ligand contact to S-adenosyl-L-methionine. K186 lines the GTP pocket. M220 provides a ligand contact to S-adenosyl-L-methionine. Residues C288 and C291 each coordinate [4Fe-4S] cluster. Residue 293–295 (RTR) coordinates GTP. C305 serves as a coordination point for [4Fe-4S] cluster.

This sequence belongs to the radical SAM superfamily. MoaA family. In terms of assembly, monomer and homodimer. Requires [4Fe-4S] cluster as cofactor.

The enzyme catalyses GTP + AH2 + S-adenosyl-L-methionine = (8S)-3',8-cyclo-7,8-dihydroguanosine 5'-triphosphate + 5'-deoxyadenosine + L-methionine + A + H(+). It functions in the pathway cofactor biosynthesis; molybdopterin biosynthesis. Functionally, catalyzes the cyclization of GTP to (8S)-3',8-cyclo-7,8-dihydroguanosine 5'-triphosphate. The protein is GTP 3',8-cyclase of Mycolicibacterium smegmatis (strain ATCC 700084 / mc(2)155) (Mycobacterium smegmatis).